The sequence spans 61 residues: MFSNIGFPGLILILVAVLILFGPKKLPEIGKALGETLKEFKKSTKELTDDAFQEKEKKEKM.

A helical transmembrane segment spans residues 1-21 (MFSNIGFPGLILILVAVLILF).

This sequence belongs to the TatA/E family. Forms a complex with TatC.

The protein resides in the cell membrane. Functionally, part of the twin-arginine translocation (Tat) system that transports large folded proteins containing a characteristic twin-arginine motif in their signal peptide across membranes. TatA could form the protein-conducting channel of the Tat system. The sequence is that of Sec-independent protein translocase protein TatA from Bacillus anthracis (strain A0248).